The primary structure comprises 176 residues: Transcriptional repressor MprA (176 aa).

In terms of domain architecture, HTH marR-type spans 26–160 (EILLTRLCMH…LEQITRKLLS (135 aa)).

Negative regulator of the multidrug operon emrAB. The chain is Transcriptional repressor MprA (mprA) from Escherichia coli O157:H7.